Reading from the N-terminus, the 162-residue chain is Deoxyuridine 5'-triphosphate nucleotidohydrolase (162 aa).

It belongs to the dUTPase family. In terms of assembly, homotrimer. The cofactor is Mg(2+).

It localises to the host cytoplasm. The protein localises to the virion. The catalysed reaction is dUTP + H2O = dUMP + diphosphate + H(+). Functionally, the viral dUTPase may play a role in lowering the dUTP concentration in natural infections to minimize misincorporation of deoxyuridine into the viral DNA and ensure the fidelity of genome replication. This is Deoxyuridine 5'-triphosphate nucleotidohydrolase from Ornithodoros (relapsing fever ticks).